We begin with the raw amino-acid sequence, 180 residues long: Stathmin-3 (180 aa).

2 S-palmitoyl cysteine lipidation sites follow: cysteine 22 and cysteine 24. Residues 38–180 (GDMEVKQLDK…NKEQREEMSG (143 aa)) form the SLD domain. Serine 50, serine 60, serine 65, serine 68, serine 72, serine 73, and serine 81 each carry phosphoserine. Residues 58–81 (LKSPSDLSPESPVLSSPPKRKDAS) form a disordered region. Residues 60–74 (SPSDLSPESPVLSSP) are compositionally biased toward low complexity. A coiled-coil region spans residues 75–179 (PKRKDASLEE…RNKEQREEMS (105 aa)).

It belongs to the stathmin family. As to quaternary structure, interacts with STAT3. Interacts with CLU (secreted form); this interaction may act as an important modulator during neuronal differentiation. N-terminal palmitoylation promotes specific anchoring to the cytosolic leaflet of Golgi membranes and subsequent vesicular trafficking along dendrites and axons. Neuronal Stathmins are substrates for palmitoyltransferases ZDHHC3, ZDHHC7 and ZDHHC15. As to expression, neuron specific.

It localises to the golgi apparatus. The protein resides in the cell projection. The protein localises to the growth cone. Its subcellular location is the axon. It is found in the cytoplasm. It localises to the cytosol. Its function is as follows. Exhibits microtubule-destabilizing activity, which is antagonized by STAT3. The chain is Stathmin-3 (Stmn3) from Rattus norvegicus (Rat).